We begin with the raw amino-acid sequence, 287 residues long: ATP synthase gamma chain (287 aa).

This sequence belongs to the ATPase gamma chain family. F-type ATPases have 2 components, CF(1) - the catalytic core - and CF(0) - the membrane proton channel. CF(1) has five subunits: alpha(3), beta(3), gamma(1), delta(1), epsilon(1). CF(0) has three main subunits: a, b and c.

Its subcellular location is the cell membrane. Functionally, produces ATP from ADP in the presence of a proton gradient across the membrane. The gamma chain is believed to be important in regulating ATPase activity and the flow of protons through the CF(0) complex. The protein is ATP synthase gamma chain of Bacillus caldotenax.